A 305-amino-acid polypeptide reads, in one-letter code: Aspartate carbamoyltransferase catalytic subunit (305 aa).

Residues arginine 52 and threonine 53 each contribute to the carbamoyl phosphate site. An L-aspartate-binding site is contributed by lysine 80. Residues arginine 102, histidine 132, and glutamine 135 each coordinate carbamoyl phosphate. 2 residues coordinate L-aspartate: arginine 165 and arginine 217. Residues alanine 258 and proline 259 each coordinate carbamoyl phosphate.

This sequence belongs to the aspartate/ornithine carbamoyltransferase superfamily. ATCase family. In terms of assembly, heterododecamer (2C3:3R2) of six catalytic PyrB chains organized as two trimers (C3), and six regulatory PyrI chains organized as three dimers (R2).

It catalyses the reaction carbamoyl phosphate + L-aspartate = N-carbamoyl-L-aspartate + phosphate + H(+). It functions in the pathway pyrimidine metabolism; UMP biosynthesis via de novo pathway; (S)-dihydroorotate from bicarbonate: step 2/3. Catalyzes the condensation of carbamoyl phosphate and aspartate to form carbamoyl aspartate and inorganic phosphate, the committed step in the de novo pyrimidine nucleotide biosynthesis pathway. The sequence is that of Aspartate carbamoyltransferase catalytic subunit from Latilactobacillus sakei subsp. sakei (strain 23K) (Lactobacillus sakei subsp. sakei).